We begin with the raw amino-acid sequence, 142 residues long: Complexin (142 aa).

Disordered stretches follow at residues 13-70 (QLSA…MRQD) and 83-105 (IVEA…PEEL). A coiled-coil region spans residues 29-138 (GDDKEKAEEE…NELKTQIEGK (110 aa)). A compositionally biased stretch (basic and acidic residues) spans 31 to 70 (DKEKAEEEERERQEAIKEAEDRRKEKHRKMEEEREKMRQD). Position 139 is a cysteine methyl ester (Cys139). Cys139 carries the S-farnesyl cysteine lipid modification. Positions 140 to 142 (VMQ) are cleaved as a propeptide — removed in mature form.

This sequence belongs to the complexin/synaphin family. Binds to the SNARE core complex containing Snap25, synaptobrevin and Syx1A.

Its subcellular location is the membrane. Its function is as follows. Positively regulates a late step in synaptic vesicle exocytosis. In Drosophila melanogaster (Fruit fly), this protein is Complexin (cpx).